Here is a 442-residue protein sequence, read N- to C-terminus: MTNSSPPFSTIHQFFPGNTFLNFESVRILSTAPYGGCDAAEFLTAIAAINPKDPQTWADAWSHMAHLAETMAEEALSRGDVVAARDGFLRASSYTRASGYLYINGPTLDEHHPLAFEISKKVQSLFRRALPFLDCDVHVVEIPYVVDSPERKEVMLPGYLYLPNAQHRLPDGKIPVLLNTGGADSVQEELYYIHPQGGHTRGYAVLTFEGPGQGIVLREHGLHMRPDWEVTGWKGYSSTLKREVGVELDLDRIAVAGASMGGYYALRAAKDSRIKACVAIDPFYDMWDFGTKHISGLFMSAWTGGWIGDDWVDRIIRLGMRTNFQLRWEVGVTAAFWGIASPAKILKEMSKYSLKGGYLEKVQCPVLVTGAGKSLYFDTEEHTMKVFDDLGHLEERWRRVWMPNRPEEGGLQAKIGAFGLANMKAYGFLDEVFGIRRVTVES.

Residue S259 is the Nucleophile of the active site.

This sequence belongs to the AB hydrolase superfamily. FUS2 hydrolase family. In terms of assembly, homodimer.

The protein operates within mycotoxin biosynthesis. Hydrolyase; part of the gene cluster that mediates the biosynthesis of the mycotoxins phomacins, leucine-derived cytochalasans with potent actin polymerization-inhibitory activities and monocot-specific antigerminative activities. The first step in the pathway is catalyzed by the hybrid PKS-NRPS phmA, assisted by the enoyl reductase phmE, that are responsible for fusion of the leucine precursor and the polyketide backbone to produce a 2-pyrrolidone intermediate. The polyketide synthase module (PKS) of phmA is responsible for the synthesis of the polyketide backbone and the downstream nonribosomal peptide synthetase (NRPS) amidates the carboxyl end of the polyketide with the leucine precursor. Because phmA lacks a designated enoylreductase (ER) domain, the required activity is provided the enoyl reductase phmE. Reduction by the hydrolyase phmG, followed by dehydration and intra-molecular Diels-Alder cyclization by the Diels-Alderase phmD then yield the required isoindolone-fused macrocycle. A number of oxidative steps catalyzed by the tailoring cytochrome P450 monooxygenase phmB, the FAD-linked oxidoreductase phmC and the short-chain dehydrogenase/reductase phmF, are further required to afford the final products, phomacin D and phomacin E. This Phaeosphaeria nodorum (strain SN15 / ATCC MYA-4574 / FGSC 10173) (Glume blotch fungus) protein is Hydrolase phmG.